We begin with the raw amino-acid sequence, 62 residues long: Short neurotoxin C (62 aa).

Over residues 1-16 (RRCFNQQSSQPQTNKS) the composition is skewed to polar residues. The interval 1 to 21 (RRCFNQQSSQPQTNKSCPPGE) is disordered. Disulfide bonds link Cys-3-Cys-24, Cys-17-Cys-41, Cys-43-Cys-54, and Cys-55-Cys-60.

Belongs to the three-finger toxin family. Short-chain subfamily. Type I alpha-neurotoxin sub-subfamily. In terms of tissue distribution, expressed by the venom gland.

Its subcellular location is the secreted. In terms of biological role, binds to muscle nicotinic acetylcholine receptor (nAChR) and inhibit acetylcholine from binding to the receptor, thereby impairing neuromuscular transmission. This chain is Short neurotoxin C, found in Laticauda crockeri (Crocker's sea snake).